The primary structure comprises 354 residues: Lariat debranching enzyme (354 aa).

Residues Cys14, His16, and Asp45 each coordinate a divalent metal cation. RNA contacts are provided by Lys59, Asn90, His91, Lys134, and His156. Residue Asn90 coordinates a divalent metal cation. A lariat recognition loop region spans residues 130 to 158; the sequence is SGIYKSFDEKKPYTYPPSPNDVVSLFHTR. His180 contacts a divalent metal cation. Positions 201, 205, 230, 231, and 232 each coordinate RNA. An a divalent metal cation-binding site is contributed by His230. His232 lines the a divalent metal cation pocket.

Belongs to the lariat debranching enzyme family. It depends on Fe(2+) as a cofactor. Requires Zn(2+) as cofactor. The cofactor is Mn(2+).

It localises to the cytoplasm. Its subcellular location is the perinuclear region. Its activity is regulated as follows. Active in presence of diverse metals including Fe(2+), Zn(2+) and Mn(2+). Binds two metal cations in two adjacent alpha and beta metal-binding pockets. The activity is the highest with Fe(2+) bound to the 2 metal-binding sites. The activity is slightly lower with Fe(2+) bound to the beta site and Zn(2+) to the alpha site and decreases further when only Zn(2+) is bound. No activity with Mn(2+). However, another study showed activity with Mn(2+) bound to the beta site and Zn(2+) to the alpha site. Mn(2+) appears unable to bind to the alpha site. In terms of biological role, cleaves the 2'-5' phosphodiester linkage at the branch point of excised lariat intron RNA and converts them into linear molecules that can be subsequently degraded, thereby facilitating ribonucleotide turnover. In Entamoeba histolytica (strain ATCC 30459 / HM-1:IMSS / ABRM), this protein is Lariat debranching enzyme.